The chain runs to 160 residues: Sec-independent protein translocase protein TatB (160 aa).

A helical transmembrane segment spans residues 1–21; sequence MFGMGFFEILVVLVVAIIFLG. A disordered region spans residues 118 to 160; sequence HLNEEVSNEEALNKEVSSDESPKEVQLATDNNTKEHDKEKENV. Composition is skewed to basic and acidic residues over residues 128–140 and 149–160; these read ALNK…ESPK and NTKEHDKEKENV.

The protein belongs to the TatB family. In terms of assembly, the Tat system comprises two distinct complexes: a TatABC complex, containing multiple copies of TatA, TatB and TatC subunits, and a separate TatA complex, containing only TatA subunits. Substrates initially bind to the TatABC complex, which probably triggers association of the separate TatA complex to form the active translocon.

The protein localises to the cell inner membrane. Part of the twin-arginine translocation (Tat) system that transports large folded proteins containing a characteristic twin-arginine motif in their signal peptide across membranes. Together with TatC, TatB is part of a receptor directly interacting with Tat signal peptides. TatB may form an oligomeric binding site that transiently accommodates folded Tat precursor proteins before their translocation. The polypeptide is Sec-independent protein translocase protein TatB (Helicobacter pylori (strain ATCC 700392 / 26695) (Campylobacter pylori)).